The chain runs to 257 residues: Metallo-beta-lactamase type 2 (257 aa).

Residues 1 to 30 (MKKNTLLKVGLCVSLLGTTQFVSTISSVQA) form the signal peptide. Residues His-116, His-118, Asp-120, His-179, and Cys-198 each coordinate Zn(2+). Substrate is bound by residues Lys-201 and Asn-210. Position 240 (His-240) interacts with Zn(2+).

This sequence belongs to the metallo-beta-lactamase superfamily. Class-B beta-lactamase family. Monomer. The cofactor is Zn(2+).

The protein localises to the periplasm. It catalyses the reaction a beta-lactam + H2O = a substituted beta-amino acid. Functionally, confers resistance to the different beta-lactams antibiotics (penicillin, cephalosporin and carbapenem) via the hydrolysis of the beta-lactam ring. This chain is Metallo-beta-lactamase type 2, found in Bacillus sp. (strain 170).